We begin with the raw amino-acid sequence, 2032 residues long: Cytoskeleton-associated protein 5 (2032 aa).

TOG regions lie at residues 1–223 (MGDD…KLPT), 268–502 (YELL…LVHG), and 588–817 (SIEV…GQSP). Lys48 carries the N6-acetyllysine modification. 3 HEAT repeats span residues 159–197 (IISL…WNRD), 356–394 (GQYA…TTTL), and 434–472 (KSLL…VVGE). The disordered stretch occupies residues 501–579 (HGKKSGLATE…GTKNKKGLET (79 aa)). The stretch at 750 to 788 (ELNVKAFISNVKTALAATNPAVRTSAITLLGVMYLYVGP) is one HEAT 4 repeat. The interval 811-848 (KMQGQSPPAPTRGIAKHSTSATDEGEDGEEPGEGGNDV) is disordered. Position 816 is a phosphoserine (Ser816). The span at 833–842 (DEGEDGEEPG) shows a compositional bias: acidic residues. 2 TOG regions span residues 853–1081 (PRIE…ANMP) and 1193–1428 (IEQL…KRPS). 3 HEAT repeats span residues 855–893 (IEIS…EAKF), 936–974 (RQHV…QTGM), and 1013–1051 (PTDL…HLGY). A compositionally biased stretch (low complexity) spans 1078 to 1095 (ANMPSKPAAPAKAMSKPM). A disordered region spans residues 1078–1156 (ANMPSKPAAP…KTTLKEDDDK (79 aa)). HEAT repeat units lie at residues 1284–1322 (ENEA…VYPA), 1324–1357 (KMFP…SYGM), and 1361–1399 (QPTP…VHGD). Residues 1420 to 1459 (IKRSAKRPSAAPVKQAEEKPQRTQNINSNANMLRKGPAED) form a disordered region. The span at 1441 to 1450 (RTQNINSNAN) shows a compositional bias: polar residues. Position 1469 is a phosphoserine (Ser1469). The segment at 1801–1822 (SMDQTGSKSDKETEKGASRIDE) is disordered. Residues 1808–1822 (KSDKETEKGASRIDE) show a composition bias toward basic and acidic residues. Ser1861 carries the post-translational modification Phosphoserine. Disordered stretches follow at residues 1893-1926 (SKGR…GNTN) and 1948-2032 (LDNT…SSRK). A compositionally biased stretch (low complexity) spans 1909–1921 (VTCVPTPTSTVSS). The interval 1932-1957 (PSVYLERLKILRQRCGLDNTKQDDRP) is interaction with TACC3. Positions 1972-1983 (ASSTDMLHSKLS) are enriched in polar residues. Residues 1984–1997 (QLRESREQHQHSDL) show a composition bias toward basic and acidic residues. The span at 2002–2015 (THSAGTMTSSSSTT) shows a compositional bias: low complexity. Over residues 2018–2032 (DDLKKRLERIKSSRK) the composition is skewed to basic and acidic residues.

Belongs to the TOG/XMAP215 family. In terms of assembly, interacts with TACC1. Interacts with HNRNPA2B1. Interacts with TACC3 independently of clathrin. Interacts with TACC3 and clathrin forming the TACC3/ch-TOG/clathrin complex located at spindle inter-microtubules bridges. Interacts with NDC80; indicative for an association with the NDC80 complex. Interacts with SLAIN2. Interacts with SLAIN1.

It localises to the cytoplasm. It is found in the cytoskeleton. The protein resides in the microtubule organizing center. Its subcellular location is the centrosome. The protein localises to the spindle pole. It localises to the spindle. It is found in the chromosome. The protein resides in the centromere. Its subcellular location is the kinetochore. Binds to the plus end of microtubules and regulates microtubule dynamics and microtubule organization. Acts as a processive microtubule polymerase. Promotes cytoplasmic microtubule nucleation and elongation. Plays a major role in organizing spindle poles. In spindle formation protects kinetochore microtubules from depolymerization by KIF2C and has an essential role in centrosomal microtubule assembly independently of KIF2C activity. Contributes to centrosome integrity. Acts as a component of the TACC3/ch-TOG/clathrin complex proposed to contribute to stabilization of kinetochore fibers of the mitotic spindle by acting as inter-microtubule bridge. The TACC3/ch-TOG/clathrin complex is required for the maintenance of kinetochore fiber tension. Enhances the strength of NDC80 complex-mediated kinetochore-tip microtubule attachments. The chain is Cytoskeleton-associated protein 5 from Mus musculus (Mouse).